Reading from the N-terminus, the 320-residue chain is MQTINTFSWIKEQITRSISISLILYIITRSSIANAYPIFAQQGYENPREATGRIVCANCHLANKPVDIEVPQAVLPDTVFEAVVRIPYDMQLKQVLANGKKGGLNVGAVLILPEGFELAPPDRISPEMKEKMGNLSFQSYRPNKQNILVIGPVPGQKYSEITFPILAPDPATKKDVHFLKYPIYVGGNRGRGQIYPDGSKSNNTVYNSTATGIVKKIVRKEKGGYEINIADASDGREVVDIIPRGPELLVSEGESIKLDQPLTSNPNVGGFGQGDAEVVLQDPLRIQGLLFFFASVILAQIFLVLKKKQFEKVQLSEMNF.

The N-terminal stretch at 1–35 (MQTINTFSWIKEQITRSISISLILYIITRSSIANA) is a signal peptide. Heme-binding residues include Y36, C56, C59, and H60. The chain crosses the membrane as a helical span at residues 286–305 (IQGLLFFFASVILAQIFLVL).

It belongs to the cytochrome f family. The 4 large subunits of the cytochrome b6-f complex are cytochrome b6, subunit IV (17 kDa polypeptide, petD), cytochrome f and the Rieske protein, while the 4 small subunits are PetG, PetL, PetM and PetN. The complex functions as a dimer. Heme serves as cofactor.

The protein resides in the plastid. It is found in the chloroplast thylakoid membrane. Its function is as follows. Component of the cytochrome b6-f complex, which mediates electron transfer between photosystem II (PSII) and photosystem I (PSI), cyclic electron flow around PSI, and state transitions. The protein is Cytochrome f (petA) of Spinacia oleracea (Spinach).